Consider the following 252-residue polypeptide: Acetoacetate decarboxylase (252 aa).

The active-site Schiff-base intermediate with acetoacetate is the lysine 116.

The protein belongs to the ADC family.

It catalyses the reaction acetoacetate + H(+) = acetone + CO2. Its function is as follows. Catalyzes the conversion of acetoacetate to acetone and carbon dioxide. The sequence is that of Acetoacetate decarboxylase from Paraburkholderia xenovorans (strain LB400).